A 398-amino-acid polypeptide reads, in one-letter code: MSQHRHQRHSRVISSSPVDTTSVGFCPTFKKFKRNDDECRAFVKRVIMSRFFKIIMISTVTSNAFFMALWTSYDIRYRLFRLLEFSEIFFVSICTSELSMKVYVDPINYWKNGYNLLDVIIIIVMFLPYALRQLMGKQFTYLYIADGMQSLRILKLIGYSQGIRTLITAVGQTVYTVASVLLLLFLLMYIFAILGFCLFGSPDNGDHDNWGNLAAAFFTLFSLATVDGWTDLQKQLDNREFALSRAFTIIFILLASFIFLNMFVGVMIMHTEDSIRKFERELMLEQQEMLMGEKQVILQRQQEEISRLMHIQKNADCTSFSELVENFKKTLSHTDPMVLDDFGTSLPFIDIYFSTLDYQDTTVHKLQELYYEIVHVLSLMLEDLPQEKPQSLEKVDEK.

The Cytoplasmic portion of the chain corresponds to 1-48; it reads MSQHRHQRHSRVISSSPVDTTSVGFCPTFKKFKRNDDECRAFVKRVIM. A helical membrane pass occupies residues 49–71; it reads SRFFKIIMISTVTSNAFFMALWT. At 72–80 the chain is on the extracellular side; sequence SYDIRYRLF. The chain crosses the membrane as a helical span at residues 81–107; sequence RLLEFSEIFFVSICTSELSMKVYVDPI. Position 108 (asparagine 108) is a topological domain, cytoplasmic. Residues 109–131 form a helical membrane-spanning segment; sequence YWKNGYNLLDVIIIIVMFLPYAL. The Extracellular segment spans residues 132–143; sequence RQLMGKQFTYLY. Residues 144–160 form a helical membrane-spanning segment; it reads IADGMQSLRILKLIGYS. The Cytoplasmic segment spans residues 161-168; sequence QGIRTLIT. Residues 169-195 traverse the membrane as a helical segment; the sequence is AVGQTVYTVASVLLLLFLLMYIFAILG. Residues 196-216 are Extracellular-facing; the sequence is FCLFGSPDNGDHDNWGNLAAA. The segment at residues 217–236 is an intramembrane region (helical; Pore-forming); sequence FFTLFSLATVDGWTDLQKQL. At 237 to 242 the chain is on the extracellular side; the sequence is DNREFA. A helical transmembrane segment spans residues 243–268; it reads LSRAFTIIFILLASFIFLNMFVGVMI. Residues 269–398 are Cytoplasmic-facing; sequence MHTEDSIRKF…PQSLEKVDEK (130 aa).

This sequence belongs to the cation channel sperm-associated (TC 1.A.1.19) family. As to quaternary structure, component of the CatSper complex or CatSpermasome composed of the core pore-forming members CATSPER1, CATSPER2, CATSPER3 and CATSPER4 as well as auxiliary members CATSPERB, CATSPERG, CATSPERD, CATSPERE, CATSPERZ, C2CD6/CATSPERT, TMEM249, TMEM262 and EFCAB9. HSPA1 may be an additional auxiliary complex member. The core complex members CATSPER1, CATSPER2, CATSPER3 and CATSPER4 form a heterotetrameric channel. The auxiliary CATSPERB, CATSPERG, CATSPERD and CATSPERE subunits form a pavilion-like structure over the pore which stabilizes the complex through interactions with CATSPER4, CATSPER3, CATSPER1 and CATSPER2 respectively. TMEM262/CATSPERH interacts with CATSPERB, further stabilizing the complex. C2CD6/CATSPERT interacts at least with CATSPERD and is required for targeting the CatSper complex in the flagellar membrane. As to expression, testis-specific.

It is found in the cell projection. The protein localises to the cilium. Its subcellular location is the flagellum membrane. The catalysed reaction is Ca(2+)(in) = Ca(2+)(out). Its activity is regulated as follows. The CatSper calcium channel is indirectly activated by extracellular progesterone and prostaglandins following the sequence: progesterone &gt; PGF1-alpha = PGE1 &gt; PGA1 &gt; PGE2 &gt;&gt; PGD2. The CatSper calcium channel is directly inhibited by endocannabinoid 2-arachidonoylglycerol (2AG). Indirect activation by progesterone takes place via the following mechanism: progesterone binds and activates the acylglycerol lipase ABHD2, which in turn mediates hydrolysis of 2AG inhibitor, relieving inhibition of the CatSper channel. The primary effect of progesterone activation is to shift voltage dependence towards more physiological, negative membrane potentials; it is not mediated by metabotropic receptors and second messengers. Sperm capacitation enhances the effect of progesterone by providing additional negative shift. Also activated by the elevation of intracellular pH. Its function is as follows. Pore-forming subunit of the CatSper complex, a sperm-specific voltage-gated calcium channel that plays a central role in calcium-dependent physiological responses essential for successful fertilization, such as sperm hyperactivation, acrosome reaction and chemotaxis towards the oocyte. The sequence is that of Cation channel sperm-associated protein 3 (CATSPER3) from Homo sapiens (Human).